The sequence spans 187 residues: Epididymal-specific lipocalin-10 (187 aa).

An N-terminal signal peptide occupies residues 1 to 19; sequence MRQGLLVLALVLVLVLVLA. The cysteines at positions 90 and 163 are disulfide-linked. Asn149 is a glycosylation site (N-linked (GlcNAc...) asparagine). Residue Lys170 is modified to N6-acetyllysine.

It belongs to the calycin superfamily. Lipocalin family.

The protein resides in the secreted. In terms of biological role, may play a role in male fertility. May act as a retinoid carrier protein within the epididymis. This chain is Epididymal-specific lipocalin-10 (LCN10), found in Homo sapiens (Human).